The following is a 288-amino-acid chain: MAGAKEIRSKIGSVKSTQKITKAMEMVAASKMRRSQESMAASRPYADTMRKVIGHLALGNLEYRHPYLEEREAKRVGYIIISSDRGLCGGLNINLFKKVMAGMKTWSEDGVEIDLAVIGSKATAFFNSYGGNVIAQNSGLGDKPSLEELIGTVGVMLKKYDEGQLDRLYVVNNKFINTMVQEPTIDQLLPLPKSEDEAMKRTHAWDYIYEPEPKPLLDALLIRYVESQVYQGVVENLACEHVARMIAMKAATDNAGDIIDELQLVYNKARQSAITQELSEIVSGASAV.

It belongs to the ATPase gamma chain family. As to quaternary structure, F-type ATPases have 2 components, CF(1) - the catalytic core - and CF(0) - the membrane proton channel. CF(1) has five subunits: alpha(3), beta(3), gamma(1), delta(1), epsilon(1). CF(0) has three main subunits: a, b and c.

Its subcellular location is the cell inner membrane. Functionally, produces ATP from ADP in the presence of a proton gradient across the membrane. The gamma chain is believed to be important in regulating ATPase activity and the flow of protons through the CF(0) complex. In Aliivibrio salmonicida (strain LFI1238) (Vibrio salmonicida (strain LFI1238)), this protein is ATP synthase gamma chain.